The following is a 248-amino-acid chain: tRNA (guanine-N(1)-)-methyltransferase (248 aa).

S-adenosyl-L-methionine-binding positions include glycine 113 and 133–138 (LGDFVL).

It belongs to the RNA methyltransferase TrmD family. As to quaternary structure, homodimer.

It localises to the cytoplasm. It catalyses the reaction guanosine(37) in tRNA + S-adenosyl-L-methionine = N(1)-methylguanosine(37) in tRNA + S-adenosyl-L-homocysteine + H(+). Functionally, specifically methylates guanosine-37 in various tRNAs. The chain is tRNA (guanine-N(1)-)-methyltransferase from Albidiferax ferrireducens (strain ATCC BAA-621 / DSM 15236 / T118) (Rhodoferax ferrireducens).